The chain runs to 739 residues: tRNA 5-methylaminomethyl-2-thiouridine biosynthesis bifunctional protein MnmC (739 aa).

The interval 1–282 is tRNA (mnm(5)s(2)U34)-methyltransferase; that stretch reads MDKVTPAKLS…KREMLTATKL (282 aa). The segment at 330–739 is FAD-dependent cmnm(5)s(2)U34 oxidoreductase; it reads IGAGVCGLMA…HRSSLKKPLS (410 aa).

This sequence in the N-terminal section; belongs to the methyltransferase superfamily. tRNA (mnm(5)s(2)U34)-methyltransferase family. It in the C-terminal section; belongs to the DAO family. The cofactor is FAD.

Its subcellular location is the cytoplasm. The enzyme catalyses 5-aminomethyl-2-thiouridine(34) in tRNA + S-adenosyl-L-methionine = 5-methylaminomethyl-2-thiouridine(34) in tRNA + S-adenosyl-L-homocysteine + H(+). In terms of biological role, catalyzes the last two steps in the biosynthesis of 5-methylaminomethyl-2-thiouridine (mnm(5)s(2)U) at the wobble position (U34) in tRNA. Catalyzes the FAD-dependent demodification of cmnm(5)s(2)U34 to nm(5)s(2)U34, followed by the transfer of a methyl group from S-adenosyl-L-methionine to nm(5)s(2)U34, to form mnm(5)s(2)U34. The sequence is that of tRNA 5-methylaminomethyl-2-thiouridine biosynthesis bifunctional protein MnmC from Psychrobacter sp. (strain PRwf-1).